The following is a 459-amino-acid chain: MSNRFAVILAAGKGTRMKSKLYKVLHPVCGKPMVQHVVDQVSQLGLQKLVTVVGHGAEMVQEQLGNVSEFALQAEQLGTAHAVDQAASVLANEEGTTLVICGDTPLITAETMEALLQQHKEAGAMATVLTAYIEEPAGYGRIVRNENGHVEKIVEHKDANEKELAIKEINTGTYCFDNKALFASLSKVSNDNVQGEYYLPDVIEILKNEGHIVSAYQTEHFDETLGVNDRVALSQAEIIMKNRINRKNMVNGVTIIDPSNTYISADAIIGSDTVLHPGTIIEGNTVIGSDCEIGPHTVIRDSEIGDRTTIRQSTVHDSKLGTEVSVGPFAHIRPDSVIGDEVRVGNFVEIKKTVFGNRSKASHLSYIGDAQVGEDVNLGCGSITVNYDGKNKFKTVIGNGVFIGCNSNLVAPVTVEDGAYVAAGSTITENVPSKALSVARARQVNKEDYVDQLLNKKKS.

The segment at 1–230 is pyrophosphorylase; sequence MSNRFAVILA…FDETLGVNDR (230 aa). UDP-N-acetyl-alpha-D-glucosamine contacts are provided by residues 9–12, Lys23, Gln73, and 78–79; these read LAAG and GT. Asp103 is a binding site for Mg(2+). UDP-N-acetyl-alpha-D-glucosamine is bound by residues Gly140, Glu155, Asn170, and Asn228. Residue Asn228 participates in Mg(2+) binding. The segment at 231–251 is linker; that stretch reads VALSQAEIIMKNRINRKNMVN. Positions 252 to 459 are N-acetyltransferase; that stretch reads GVTIIDPSNT…VDQLLNKKKS (208 aa). 2 residues coordinate UDP-N-acetyl-alpha-D-glucosamine: Arg333 and Lys351. His363 (proton acceptor) is an active-site residue. 2 residues coordinate UDP-N-acetyl-alpha-D-glucosamine: Tyr366 and Asn377. Residues 386 to 387, Ala423, and Arg440 each bind acetyl-CoA; that span reads NY.

It in the N-terminal section; belongs to the N-acetylglucosamine-1-phosphate uridyltransferase family. This sequence in the C-terminal section; belongs to the transferase hexapeptide repeat family. Homotrimer. It depends on Mg(2+) as a cofactor.

It localises to the cytoplasm. It carries out the reaction alpha-D-glucosamine 1-phosphate + acetyl-CoA = N-acetyl-alpha-D-glucosamine 1-phosphate + CoA + H(+). The enzyme catalyses N-acetyl-alpha-D-glucosamine 1-phosphate + UTP + H(+) = UDP-N-acetyl-alpha-D-glucosamine + diphosphate. The protein operates within nucleotide-sugar biosynthesis; UDP-N-acetyl-alpha-D-glucosamine biosynthesis; N-acetyl-alpha-D-glucosamine 1-phosphate from alpha-D-glucosamine 6-phosphate (route II): step 2/2. It functions in the pathway nucleotide-sugar biosynthesis; UDP-N-acetyl-alpha-D-glucosamine biosynthesis; UDP-N-acetyl-alpha-D-glucosamine from N-acetyl-alpha-D-glucosamine 1-phosphate: step 1/1. It participates in bacterial outer membrane biogenesis; LPS lipid A biosynthesis. Functionally, catalyzes the last two sequential reactions in the de novo biosynthetic pathway for UDP-N-acetylglucosamine (UDP-GlcNAc). The C-terminal domain catalyzes the transfer of acetyl group from acetyl coenzyme A to glucosamine-1-phosphate (GlcN-1-P) to produce N-acetylglucosamine-1-phosphate (GlcNAc-1-P), which is converted into UDP-GlcNAc by the transfer of uridine 5-monophosphate (from uridine 5-triphosphate), a reaction catalyzed by the N-terminal domain. This Bacillus cereus (strain AH187) protein is Bifunctional protein GlmU.